The following is a 366-amino-acid chain: HTH-type transcriptional regulator MSMEG_6044/MSMEI_5883 (366 aa).

The region spanning 11-66 (ATLASLAAELKVSRTTISNAYNRPDQLSADLRERIFDAAKRLGYPGPDPVARSLRT) is the HTH lacI-type domain. The segment at residues 13-32 (LASLAAELKVSRTTISNAYN) is a DNA-binding region (H-T-H motif).

Transcriptional regulator that negatively regulates transcription of the mce4 operon, which is involved in cholesterol transport and utilization. Acts by binding to the promoter region of the mce4 operon. This chain is HTH-type transcriptional regulator MSMEG_6044/MSMEI_5883, found in Mycolicibacterium smegmatis (strain ATCC 700084 / mc(2)155) (Mycobacterium smegmatis).